A 362-amino-acid chain; its full sequence is N-acylethanolamine-hydrolyzing acid amidase (362 aa).

The N-terminal stretch at 1 to 33 is a signal peptide; that stretch reads MGTPAIRAACHGAHLALALLLLLSLSDPWLWAT. Residues Asn42 and Asn112 are each glycosylated (N-linked (GlcNAc...) asparagine). The active-site Nucleophile is Cys131. Asn314 and Asn338 each carry an N-linked (GlcNAc...) asparagine glycan.

It belongs to the acid ceramidase family. As to quaternary structure, heterodimer of an alpha and a beta subunit, produced by autocatalytic cleavage. Post-translationally, N-glycosylated. Tunicamycin treatment causes a reduction in specific activity against N-palmitoylethanolamine. Autoproteolytic cleavage at pH 4.5 gives rise to the alpha and beta subunit. Cleavage gives rise to a conformation change that activates the enzyme. The same catalytic Cys residue mediates the autoproteolytic cleavage and subsequent hydrolysis of lipid substrates. Expressed in brain, cecum, colon, heart, ileum, kidney, liver, lung, spleen, stomach, submaxillary gland, testis and thymus.

It is found in the lysosome. Its subcellular location is the membrane. It carries out the reaction N-hexadecanoylethanolamine + H2O = ethanolamine + hexadecanoate. The catalysed reaction is an N-(long-chain fatty acyl)ethanolamine + H2O = a long-chain fatty acid + ethanolamine. The enzyme catalyses N-dodecanoylethanolamine + H2O = dodecanoate + ethanolamine. It catalyses the reaction N-tetradecanoylethanolamine + H2O = tetradecanoate + ethanolamine. It carries out the reaction an N-acylsphing-4-enine + H2O = sphing-4-enine + a fatty acid. The catalysed reaction is N-hexadecanoylsphing-4-enine + H2O = sphing-4-enine + hexadecanoate. The enzyme catalyses N-dodecanoylsphing-4-enine + H2O = dodecanoate + sphing-4-enine. It functions in the pathway lipid metabolism; fatty acid metabolism. Its activity is regulated as follows. Stimulated by DTT. Stimulated by nonionic detergent of the polyoxyethylenep-t-octylphenylether type (Triton X-100 or Nonidet P-40) whereas 3-[(3-cholamidopropyl)dimethylammonio]propane-1-sulfonate (CHAPS) and octyl alpha-D-glucopyranoside decrease the N-(long-chain-acyl)ethanolamine deacylase activity. Polysorbate 20 (Tween 20) is inhibitory. Stimulated by endogenous phospholipids such as choline- or ethanolamine-containing phospholipids, and dihydrolipoic acid. Degrades bioactive fatty acid amides to their corresponding acids, with the following preference: N-palmitoylethanolamine &gt; N-myristoylethanolamine &gt; N-stearoylethanolamine &gt; N-oleoylethanolamine &gt; N-linoleoylethanolamine &gt; N-arachidonoylethanolamine. This chain is N-acylethanolamine-hydrolyzing acid amidase, found in Rattus norvegicus (Rat).